The chain runs to 162 residues: uncharacterized protein (162 aa).

An N-terminal signal peptide occupies residues 1–23; that stretch reads MLSLKSPAVLLSMVILVPLFALA.

This is an uncharacterized protein from Mycosarcoma maydis (Corn smut fungus).